The chain runs to 120 residues: MGVKYSSKINKIRTFALSLIFIGFFVMYGGIFFRTSPIVMTLFMILGLLFIIASTVVYFWIGMLSTKTVQVVCPSCNKVTKMLGRVDVCMYCNEPLTLDPTLEGKEFDEKYNRKTRDKKS.

2 consecutive transmembrane segments (helical) span residues 12 to 32 (IRTFALSLIFIGFFVMYGGIF) and 42 to 62 (LFMILGLLFIIASTVVYFWIG).

This sequence belongs to the UPF0295 family.

The protein localises to the cell membrane. In Anoxybacillus flavithermus (strain DSM 21510 / WK1), this protein is UPF0295 protein Aflv_0370.